The sequence spans 222 residues: Triosephosphate isomerase (222 aa).

Position 9–11 (9–11 (NYK)) interacts with substrate. Residue His-93 is the Electrophile of the active site. The active-site Proton acceptor is Glu-141. Substrate-binding positions include Ile-146, Gly-181, and 202–203 (AS).

The protein belongs to the triosephosphate isomerase family. Homotetramer; dimer of dimers.

The protein resides in the cytoplasm. The enzyme catalyses D-glyceraldehyde 3-phosphate = dihydroxyacetone phosphate. The protein operates within carbohydrate biosynthesis; gluconeogenesis. It participates in carbohydrate degradation; glycolysis; D-glyceraldehyde 3-phosphate from glycerone phosphate: step 1/1. Functionally, involved in the gluconeogenesis. Catalyzes stereospecifically the conversion of dihydroxyacetone phosphate (DHAP) to D-glyceraldehyde-3-phosphate (G3P). The protein is Triosephosphate isomerase of Methanosarcina acetivorans (strain ATCC 35395 / DSM 2834 / JCM 12185 / C2A).